We begin with the raw amino-acid sequence, 386 residues long: S-adenosylmethionine synthase (386 aa).

H14 lines the ATP pocket. Mg(2+) is bound at residue D16. E42 is a K(+) binding site. L-methionine contacts are provided by E55 and Q101. The interval 101 to 111 (QSADIALGVDE) is flexible loop. Residues 166–168 (DGK), 233–234 (RF), D242, 248–249 (RK), A265, and K269 contribute to the ATP site. Residue D242 coordinates L-methionine. K273 provides a ligand contact to L-methionine.

It belongs to the AdoMet synthase family. Homotetramer; dimer of dimers. It depends on Mg(2+) as a cofactor. The cofactor is K(+).

The protein localises to the cytoplasm. It carries out the reaction L-methionine + ATP + H2O = S-adenosyl-L-methionine + phosphate + diphosphate. Its pathway is amino-acid biosynthesis; S-adenosyl-L-methionine biosynthesis; S-adenosyl-L-methionine from L-methionine: step 1/1. In terms of biological role, catalyzes the formation of S-adenosylmethionine (AdoMet) from methionine and ATP. The overall synthetic reaction is composed of two sequential steps, AdoMet formation and the subsequent tripolyphosphate hydrolysis which occurs prior to release of AdoMet from the enzyme. The protein is S-adenosylmethionine synthase of Acholeplasma laidlawii (strain PG-8A).